The chain runs to 688 residues: Elongation factor G (688 aa).

Residues 8–282 (DKFRNFGIMA…GVVDYLPSPL (275 aa)) form the tr-type G domain. Residues 17–24 (AHIDAGKT), 81–85 (DTPGH), and 135–138 (NKMD) contribute to the GTP site.

This sequence belongs to the TRAFAC class translation factor GTPase superfamily. Classic translation factor GTPase family. EF-G/EF-2 subfamily.

Its subcellular location is the cytoplasm. Catalyzes the GTP-dependent ribosomal translocation step during translation elongation. During this step, the ribosome changes from the pre-translocational (PRE) to the post-translocational (POST) state as the newly formed A-site-bound peptidyl-tRNA and P-site-bound deacylated tRNA move to the P and E sites, respectively. Catalyzes the coordinated movement of the two tRNA molecules, the mRNA and conformational changes in the ribosome. The chain is Elongation factor G from Clostridium botulinum (strain Alaska E43 / Type E3).